A 2194-amino-acid chain; its full sequence is Genome polyprotein (2194 aa).

The N-myristoyl glycine; by host moiety is linked to residue G2. Residues 2–1504 (GAQVSTQKTG…HVSRAFICLQ (1503 aa)) are Cytoplasmic-facing. The tract at residues 566 to 582 (LYQNDPEGALNKAVGRV) is amphipathic alpha-helix. Active-site for protease 2A activity residues include H881 and D899. Residues C916 and C918 each contribute to the Zn(2+) site. Catalysis depends on C970, which acts as the For protease 2A activity. Residues C976 and H978 each contribute to the Zn(2+) site. The segment at 1110-1182 (NNNWLKKFTE…EQSAPSQSDQ (73 aa)) is membrane-binding. The tract at residues 1110 to 1248 (NNNWLKKFTE…SPGAGKSVAT (139 aa)) is oligomerization. An RNA-binding region spans residues 1131 to 1135 (AIKIQ). One can recognise an SF3 helicase domain in the interval 1214 to 1370 (EKKMSNYIQF…SMYSQNGKIN (157 aa)). Residues C1378, C1390, and C1395 each contribute to the Zn(2+) site. A C4-type; degenerate zinc finger spans residues 1378–1395 (CDEECCPVNFKRCCPLVC). The tract at residues 1422 to 1429 (EYNHRHSV) is RNA-binding. The segment at 1433–1438 (LEALFQ) is oligomerization. Residues 1505–1520 (ALTTFVSVAGIIYIIY) lie within the membrane without spanning it. The Cytoplasmic segment spans residues 1521–2194 (KLFAGFQGAY…TLRRKWLDSF (674 aa)). Residue Y1530 is modified to O-(5'-phospho-RNA)-tyrosine. One can recognise a Peptidase C3 domain in the interval 1550–1728 (GPAFEFAVAM…FSAALLRHYF (179 aa)). Residues H1589, E1620, and C1696 each act as for protease 3C activity in the active site. The 117-residue stretch at 1959 to 2075 (GHLIAFDYSG…SYPHPIDASL (117 aa)) folds into the RdRp catalytic domain. Residues D1965 and D2061 each contribute to the Mg(2+) site.

This sequence belongs to the picornaviruses polyprotein family. As to quaternary structure, interacts with capsid protein VP1 and capsid protein VP3 to form heterotrimeric protomers. Interacts with capsid protein VP0, and capsid protein VP3 to form heterotrimeric protomers. Five protomers subsequently associate to form pentamers which serve as building blocks for the capsid. Interacts with capsid protein VP2, capsid protein VP3 and capsid protein VP4 following cleavage of capsid protein VP0. In terms of assembly, interacts with capsid protein VP1 and capsid protein VP3 in the mature capsid. As to quaternary structure, interacts with capsid protein VP0 and capsid protein VP1 to form heterotrimeric protomers. Five protomers subsequently associate to form pentamers which serve as building blocks for the capsid. Interacts with capsid protein VP4 in the mature capsid. Interacts with protein 2C; this interaction may be important for virion morphogenesis. Interacts with capsid protein VP1 and capsid protein VP3. In terms of assembly, homodimer. As to quaternary structure, homohexamer; forms a hexameric ring structure with 6-fold symmetry characteristic of AAA+ ATPases. Interacts (via N-terminus) with host RTN3 (via reticulon domain); this interaction is important for viral replication. Interacts with capsid protein VP3; this interaction may be important for virion morphogenesis. Interacts with protein 3CD. In terms of assembly, homodimer. Interacts with host GBF1. Interacts (via GOLD domain) with host ACBD3 (via GOLD domain); this interaction allows the formation of a viral protein 3A/ACBD3 heterotetramer with a 2:2 stoichiometry, which will stimulate the recruitment of host PI4KB in order to synthesize PI4P at the viral RNA replication sites. As to quaternary structure, interacts with RNA-directed RNA polymerase. Interacts with protein 3AB and with RNA-directed RNA polymerase. In terms of assembly, interacts with Viral protein genome-linked and with protein 3CD. Mg(2+) is required as a cofactor. Post-translationally, specific enzymatic cleavages in vivo by the viral proteases yield processing intermediates and the mature proteins. In terms of processing, myristoylation is required for the formation of pentamers during virus assembly. Further assembly of 12 pentamers and a molecule of genomic RNA generates the provirion. During virion maturation, immature virions are rendered infectious following cleavage of VP0 into VP4 and VP2. This maturation seems to be an autocatalytic event triggered by the presence of RNA in the capsid and it is followed by a conformational change infectious virion. Post-translationally, myristoylation is required during RNA encapsidation and formation of the mature virus particle. In terms of processing, VPg is uridylylated by the polymerase into VPg-pUpU. This acts as a nucleotide-peptide primer for the genomic RNA replication.

It is found in the virion. The protein resides in the host cytoplasm. It localises to the host cytoplasmic vesicle membrane. The protein localises to the host nucleus. It carries out the reaction a ribonucleoside 5'-triphosphate + H2O = a ribonucleoside 5'-diphosphate + phosphate + H(+). It catalyses the reaction Selective cleavage of Tyr-|-Gly bond in the picornavirus polyprotein.. The enzyme catalyses RNA(n) + a ribonucleoside 5'-triphosphate = RNA(n+1) + diphosphate. The catalysed reaction is Selective cleavage of Gln-|-Gly bond in the poliovirus polyprotein. In other picornavirus reactions Glu may be substituted for Gln, and Ser or Thr for Gly.. Replication or transcription is subject to high level of random mutations by the nucleotide analog ribavirin. Its function is as follows. Forms an icosahedral capsid of pseudo T=3 symmetry with capsid proteins VP2 and VP3. The capsid is 300 Angstroms in diameter, composed of 60 copies of each capsid protein and enclosing the viral positive strand RNA genome. Capsid protein VP1 mainly forms the vertices of the capsid. Capsid protein VP1 interacts with host cell receptor to provide virion attachment to target host cells. This attachment induces virion internalization. Tyrosine kinases are probably involved in the entry process. After binding to its receptor, the capsid undergoes conformational changes. Capsid protein VP1 N-terminus (that contains an amphipathic alpha-helix) and capsid protein VP4 are externalized. Together, they shape a pore in the host membrane through which viral genome is translocated to host cell cytoplasm. Functionally, forms an icosahedral capsid of pseudo T=3 symmetry with capsid proteins VP2 and VP3. The capsid is 300 Angstroms in diameter, composed of 60 copies of each capsid protein and enclosing the viral positive strand RNA genome. In terms of biological role, lies on the inner surface of the capsid shell. After binding to the host receptor, the capsid undergoes conformational changes. Capsid protein VP4 is released, Capsid protein VP1 N-terminus is externalized, and together, they shape a pore in the host membrane through which the viral genome is translocated into the host cell cytoplasm. Component of immature procapsids, which is cleaved into capsid proteins VP4 and VP2 after maturation. Allows the capsid to remain inactive before the maturation step. Its function is as follows. Cysteine protease that cleaves viral polyprotein and specific host proteins. It is responsible for the autocatalytic cleavage between the P1 and P2 regions, which is the first cleavage occurring in the polyprotein. Also cleaves the host translation initiation factor EIF4G1, in order to shut down the capped cellular mRNA translation. Inhibits the host nucleus-cytoplasm protein and RNA trafficking by cleaving host members of the nuclear pores. Counteracts stress granule formation probably by antagonizing its assembly or promoting its dissassembly. Functionally, plays an essential role in the virus replication cycle by acting as a viroporin. Creates a pore in the host endoplasmic reticulum and as a consequence releases Ca2+ in the cytoplasm of infected cell. In turn, high levels of cytoplasmic calcium may trigger membrane trafficking and transport of viral ER-associated proteins to viroplasms, sites of viral genome replication. In terms of biological role, induces and associates with structural rearrangements of intracellular membranes. Displays RNA-binding, nucleotide binding and NTPase activities. May play a role in virion morphogenesis and viral RNA encapsidation by interacting with the capsid protein VP3. Localizes the viral replication complex to the surface of membranous vesicles. Together with protein 3CD binds the Cis-Active RNA Element (CRE) which is involved in RNA synthesis initiation. Acts as a cofactor to stimulate the activity of 3D polymerase, maybe through a nucleid acid chaperone activity. Its function is as follows. Localizes the viral replication complex to the surface of membranous vesicles. It inhibits host cell endoplasmic reticulum-to-Golgi apparatus transport and causes the disassembly of the Golgi complex, possibly through GBF1 interaction. This would result in depletion of MHC, trail receptors and IFN receptors at the host cell surface. Plays an essential role in viral RNA replication by recruiting ACBD3 and PI4KB at the viral replication sites, thereby allowing the formation of the rearranged membranous structures where viral replication takes place. Functionally, acts as a primer for viral RNA replication and remains covalently bound to viral genomic RNA. VPg is uridylylated prior to priming replication into VPg-pUpU. The oriI viral genomic sequence may act as a template for this. The VPg-pUpU is then used as primer on the genomic RNA poly(A) by the RNA-dependent RNA polymerase to replicate the viral genome. During genome replication, the VPg-RNA linkage is removed by the host TDP2, thereby accelerating replication. During the late stage of the replication cycle, host TDP2 is excluded from sites of viral RNA synthesis and encapsidation, allowing for the generation of progeny virions. In terms of biological role, involved in the viral replication complex and viral polypeptide maturation. It exhibits protease activity with a specificity and catalytic efficiency that is different from protease 3C. Protein 3CD lacks polymerase activity. Protein 3CD binds to the 5'UTR of the viral genome. Replicates the viral genomic RNA on the surface of intracellular membranes. May form linear arrays of subunits that propagate along a strong head-to-tail interaction called interface-I. Covalently attaches UMP to a tyrosine of VPg, which is used to prime RNA synthesis. The positive stranded RNA genome is first replicated at virus induced membranous vesicles, creating a dsRNA genomic replication form. This dsRNA is then used as template to synthesize positive stranded RNA genomes. ss(+)RNA genomes are either translated, replicated or encapsidated. Its function is as follows. Major viral protease that mediates proteolytic processing of the polyprotein. Cleaves host EIF5B, contributing to host translation shutoff. Also cleaves host PABPC1, contributing to host translation shutoff. Cleaves host NLRP1, triggers host N-glycine-mediated degradation of the autoinhibitory NLRP1 N-terminal fragment. The chain is Genome polyprotein from Homo sapiens (Human).